A 161-amino-acid chain; its full sequence is Large ribosomal subunit protein uL11 (161 aa).

This sequence belongs to the universal ribosomal protein uL11 family. In terms of assembly, part of the ribosomal stalk of the 50S ribosomal subunit. Interacts with L10 and the large rRNA to form the base of the stalk. L10 forms an elongated spine to which L12 dimers bind in a sequential fashion forming a multimeric L10(L12)X complex.

In terms of biological role, forms part of the ribosomal stalk which helps the ribosome interact with GTP-bound translation factors. In Methanococcoides burtonii (strain DSM 6242 / NBRC 107633 / OCM 468 / ACE-M), this protein is Large ribosomal subunit protein uL11.